We begin with the raw amino-acid sequence, 274 residues long: Carbonic anhydrase (274 aa).

Zn(2+)-binding residues include Cys-39, His-98, and Cys-101. The interval 214–274 is disordered; that stretch reads EDEYAPHPNS…QAERIYRGSR (61 aa). 2 stretches are compositionally biased toward basic and acidic residues: residues 234 to 245 and 261 to 274; these read PGKERPGREKAT and LPRE…RGSR.

It belongs to the beta-class carbonic anhydrase family. A hexamer formed by a trimer of dimers. Interacts with the first 260 residues of CcmM; both the N-terminal 206 residues and the C-terminal tail contribute to CcmM binding. Interacts with full-length and the N-terminal 249 residues of CcmM. A probable CcmM-CcaA-CcmN complex as well as a CcaA-RuBisCO-CcmM complex can also be isolated. It depends on Zn(2+) as a cofactor.

It localises to the carboxysome. It carries out the reaction hydrogencarbonate + H(+) = CO2 + H2O. Its activity is regulated as follows. Inhibited by ethoxyzolamide. Its function is as follows. Reversible hydration of carbon dioxide. Essential to photosynthetic carbon dioxide fixation, supplies CO(2) to RuBisCO (ribulose bisphosphate carboxylase, rbcL-rbcS) in the carboxysome. This is Carbonic anhydrase from Synechocystis sp. (strain ATCC 27184 / PCC 6803 / Kazusa).